The primary structure comprises 494 residues: UPF0371 protein SUB1165 (494 aa).

The protein belongs to the UPF0371 family.

In Streptococcus uberis (strain ATCC BAA-854 / 0140J), this protein is UPF0371 protein SUB1165.